The primary structure comprises 101 residues: Threonine-rich inner membrane protein GfcA (101 aa).

The N-terminal stretch at 1 to 21 (MKHKLSAILMAFMLTTPAAFA) is a signal peptide. At 22-59 (APEATNGTEATTGTTGTTTTTTGATTTATTTGGVAAGA) the chain is on the cytoplasmic side. A disordered region spans residues 24 to 45 (EATNGTEATTGTTGTTTTTTGA). The chain crosses the membrane as a helical span at residues 60–80 (VGTATVVGVATAVGVATLAVV). At 81 to 101 (AANDSGDGGSHNTSTTTSTTR) the chain is on the periplasmic side. Residues 82–101 (ANDSGDGGSHNTSTTTSTTR) are disordered.

It is found in the cell inner membrane. The sequence is that of Threonine-rich inner membrane protein GfcA (gfcA) from Escherichia coli (strain K12).